Reading from the N-terminus, the 525-residue chain is Nucleolar and spindle-associated protein 1-C (525 aa).

Disordered regions lie at residues Phe-43–His-203, Thr-250–Ala-293, Thr-373–Lys-398, and Leu-452–Gln-525. Residues Ser-58 to Ser-69 are compositionally biased toward polar residues. Basic residues predominate over residues Thr-82–Leu-92. A compositionally biased stretch (basic and acidic residues) spans Lys-93–Phe-102. Residues Ser-113–Leu-127 show a composition bias toward polar residues. Over residues Thr-160 to Ser-169 the composition is skewed to basic and acidic residues. Positions Pro-270 to Arg-285 are enriched in polar residues. Residues Cys-476–Leu-494 show a composition bias toward polar residues. Residues Gln-495–Gln-514 are compositionally biased toward basic and acidic residues.

Belongs to the NUSAP family. Interacts with DNA, microtubules, ipo7, kpna2 and kpnb1. Microtubule stabilization is inhibited by ipo7 and kpna2, while microtubule bundling is inhibited by kpnb1. Active GTP-bound ran causes dissociation of ipo7 and kpnb1.

The protein localises to the cytoplasm. It is found in the nucleus. The protein resides in the cytoskeleton. Its subcellular location is the spindle. Functionally, microtubule-associated protein with the capacity to bundle and stabilize microtubules. May associate with chromosomes and promote the organization of meiotic or mitotic spindle microtubules around them. This chain is Nucleolar and spindle-associated protein 1-C (nusap1-c), found in Xenopus laevis (African clawed frog).